A 258-amino-acid polypeptide reads, in one-letter code: L-aspartate dehydrogenase 1 (258 aa).

NAD(+) is bound by residues alanine 121 and asparagine 181. Histidine 211 is an active-site residue.

Belongs to the L-aspartate dehydrogenase family.

The enzyme catalyses L-aspartate + NADP(+) + H2O = oxaloacetate + NH4(+) + NADPH + H(+). The catalysed reaction is L-aspartate + NAD(+) + H2O = oxaloacetate + NH4(+) + NADH + H(+). It participates in cofactor biosynthesis; NAD(+) biosynthesis; iminoaspartate from L-aspartate (dehydrogenase route): step 1/1. In terms of biological role, specifically catalyzes the NAD or NADP-dependent dehydrogenation of L-aspartate to iminoaspartate. The sequence is that of L-aspartate dehydrogenase 1 from Bordetella pertussis (strain Tohama I / ATCC BAA-589 / NCTC 13251).